The following is a 348-amino-acid chain: 3-isopropylmalate dehydrogenase (348 aa).

76 to 87 (GPKWTDPNNRPE) contributes to the NAD(+) binding site. 4 residues coordinate substrate: arginine 94, arginine 104, arginine 132, and aspartate 217. 3 residues coordinate Mg(2+): aspartate 217, aspartate 241, and aspartate 245. Position 275 to 287 (275 to 287 (GSAPDIAGKNVAN)) interacts with NAD(+).

This sequence belongs to the isocitrate and isopropylmalate dehydrogenases family. LeuB type 1 subfamily. As to quaternary structure, homodimer. Mg(2+) serves as cofactor. Requires Mn(2+) as cofactor.

The protein localises to the cytoplasm. It carries out the reaction (2R,3S)-3-isopropylmalate + NAD(+) = 4-methyl-2-oxopentanoate + CO2 + NADH. It participates in amino-acid biosynthesis; L-leucine biosynthesis; L-leucine from 3-methyl-2-oxobutanoate: step 3/4. Its function is as follows. Catalyzes the oxidation of 3-carboxy-2-hydroxy-4-methylpentanoate (3-isopropylmalate) to 3-carboxy-4-methyl-2-oxopentanoate. The product decarboxylates to 4-methyl-2 oxopentanoate. The sequence is that of 3-isopropylmalate dehydrogenase from Staphylococcus aureus (strain COL).